A 264-amino-acid chain; its full sequence is Protein DSE2 (264 aa).

The N-terminal stretch at methionine 1–alanine 23 is a signal peptide. The span at threonine 75–glutamate 92 shows a compositional bias: low complexity. The disordered stretch occupies residues threonine 75–leucine 213. Acidic residues predominate over residues threonine 93 to threonine 104. 3 stretches are compositionally biased toward low complexity: residues threonine 105–serine 147, serine 157–lysine 168, and threonine 178–serine 211. The GPI-anchor amidated aspartate moiety is linked to residue aspartate 247. The propeptide at alanine 248–serine 264 is removed in mature form.

The protein localises to the secreted. It is found in the cell wall. The protein resides in the membrane. Its function is as follows. Involved in pseudohyphal growth, cell wall metabolism and required for the separation of the mother and daughter cells. The polypeptide is Protein DSE2 (DSE2) (Kluyveromyces lactis (strain ATCC 8585 / CBS 2359 / DSM 70799 / NBRC 1267 / NRRL Y-1140 / WM37) (Yeast)).